Here is a 122-residue protein sequence, read N- to C-terminus: Acidic phospholipase A2 (122 aa).

Intrachain disulfides connect C26-C115, C28-C44, C43-C95, C49-C122, C50-C88, C57-C81, and C75-C86. Positions 27, 29, and 31 each coordinate Ca(2+). H47 is a catalytic residue. D48 is a binding site for Ca(2+). The active site involves D89.

This sequence belongs to the phospholipase A2 family. Group II subfamily. D49 sub-subfamily. As to quaternary structure, monomer. It depends on Ca(2+) as a cofactor. Expressed by the venom gland.

It is found in the secreted. It carries out the reaction a 1,2-diacyl-sn-glycero-3-phosphocholine + H2O = a 1-acyl-sn-glycero-3-phosphocholine + a fatty acid + H(+). Its function is as follows. PLA2 catalyzes the calcium-dependent hydrolysis of the 2-acyl groups in 3-sn-phosphoglycerides. The protein is Acidic phospholipase A2 of Gloydius blomhoffii (Mamushi).